A 339-amino-acid chain; its full sequence is UDP-N-acetylenolpyruvoylglucosamine reductase (339 aa).

In terms of domain architecture, FAD-binding PCMH-type spans valine 19–valine 189. The active site involves arginine 166. The Proton donor role is filled by serine 239. Residue glutamate 335 is part of the active site.

The protein belongs to the MurB family. The cofactor is FAD.

The protein resides in the cytoplasm. It carries out the reaction UDP-N-acetyl-alpha-D-muramate + NADP(+) = UDP-N-acetyl-3-O-(1-carboxyvinyl)-alpha-D-glucosamine + NADPH + H(+). It participates in cell wall biogenesis; peptidoglycan biosynthesis. Cell wall formation. This chain is UDP-N-acetylenolpyruvoylglucosamine reductase, found in Pseudomonas fluorescens (strain Pf0-1).